Reading from the N-terminus, the 650-residue chain is Fructose-1,6-bisphosphatase class 3 (650 aa).

The protein belongs to the FBPase class 3 family. It depends on Mn(2+) as a cofactor.

It carries out the reaction beta-D-fructose 1,6-bisphosphate + H2O = beta-D-fructose 6-phosphate + phosphate. The protein operates within carbohydrate biosynthesis; gluconeogenesis. This chain is Fructose-1,6-bisphosphatase class 3, found in Staphylococcus saprophyticus subsp. saprophyticus (strain ATCC 15305 / DSM 20229 / NCIMB 8711 / NCTC 7292 / S-41).